We begin with the raw amino-acid sequence, 699 residues long: D-(-)-3-hydroxybutyrate oligomer hydrolase (699 aa).

The first 33 residues, Met-1–Ala-33, serve as a signal peptide directing secretion. Residue Ser-311 is the Charge relay system of the active site.

The protein belongs to the D-(-)-3-hydroxybutyrate oligomer hydrolase family.

The protein resides in the secreted. The enzyme catalyses (3R)-hydroxybutanoate dimer + H2O = 2 (R)-3-hydroxybutanoate + H(+). The protein operates within lipid metabolism; butanoate metabolism. Participates in the degradation of poly-3-hydroxybutyrate (PHB). It works downstream of poly(3-hydroxybutyrate) depolymerase, hydrolyzing D(-)-3-hydroxybutyrate oligomers of various length (3HB-oligomers) into 3HB-monomers. The protein is D-(-)-3-hydroxybutyrate oligomer hydrolase of Burkholderia mallei (strain ATCC 23344).